Reading from the N-terminus, the 556-residue chain is 2-succinyl-5-enolpyruvyl-6-hydroxy-3-cyclohexene-1-carboxylate synthase (556 aa).

It belongs to the TPP enzyme family. MenD subfamily. As to quaternary structure, homodimer. The cofactor is Mg(2+). Mn(2+) serves as cofactor. Thiamine diphosphate is required as a cofactor.

It catalyses the reaction isochorismate + 2-oxoglutarate + H(+) = 5-enolpyruvoyl-6-hydroxy-2-succinyl-cyclohex-3-ene-1-carboxylate + CO2. It functions in the pathway quinol/quinone metabolism; 1,4-dihydroxy-2-naphthoate biosynthesis; 1,4-dihydroxy-2-naphthoate from chorismate: step 2/7. It participates in quinol/quinone metabolism; menaquinone biosynthesis. Catalyzes the thiamine diphosphate-dependent decarboxylation of 2-oxoglutarate and the subsequent addition of the resulting succinic semialdehyde-thiamine pyrophosphate anion to isochorismate to yield 2-succinyl-5-enolpyruvyl-6-hydroxy-3-cyclohexene-1-carboxylate (SEPHCHC). This Salmonella paratyphi B (strain ATCC BAA-1250 / SPB7) protein is 2-succinyl-5-enolpyruvyl-6-hydroxy-3-cyclohexene-1-carboxylate synthase.